A 211-amino-acid polypeptide reads, in one-letter code: ATP phosphoribosyltransferase (211 aa).

The protein belongs to the ATP phosphoribosyltransferase family. Short subfamily. As to quaternary structure, heteromultimer composed of HisG and HisZ subunits.

It localises to the cytoplasm. The enzyme catalyses 1-(5-phospho-beta-D-ribosyl)-ATP + diphosphate = 5-phospho-alpha-D-ribose 1-diphosphate + ATP. It participates in amino-acid biosynthesis; L-histidine biosynthesis; L-histidine from 5-phospho-alpha-D-ribose 1-diphosphate: step 1/9. In terms of biological role, catalyzes the condensation of ATP and 5-phosphoribose 1-diphosphate to form N'-(5'-phosphoribosyl)-ATP (PR-ATP). Has a crucial role in the pathway because the rate of histidine biosynthesis seems to be controlled primarily by regulation of HisG enzymatic activity. The protein is ATP phosphoribosyltransferase of Pseudomonas paraeruginosa (strain DSM 24068 / PA7) (Pseudomonas aeruginosa (strain PA7)).